Consider the following 148-residue polypeptide: Cytochrome c-type biogenesis protein CcmE (148 aa).

The Cytoplasmic portion of the chain corresponds to 1-7; it reads MKARNKR. Residues 8 to 28 form a helical; Signal-anchor for type II membrane protein membrane-spanning segment; it reads LMLVGGGIALLVAAAALVLSA. Over 29-148 the chain is Periplasmic; that stretch reads FQQNLVFFHT…AHKTATTVQQ (120 aa). Residues His-123 and Tyr-127 each contribute to the heme site.

It belongs to the CcmE/CycJ family.

The protein resides in the cell inner membrane. Heme chaperone required for the biogenesis of c-type cytochromes. Transiently binds heme delivered by CcmC and transfers the heme to apo-cytochromes in a process facilitated by CcmF and CcmH. The chain is Cytochrome c-type biogenesis protein CcmE from Azoarcus sp. (strain BH72).